A 212-amino-acid chain; its full sequence is Pyrrolidone-carboxylate peptidase (212 aa).

Residues Glu-80, Cys-143, and His-165 contribute to the active site.

The protein belongs to the peptidase C15 family. Homotetramer.

It is found in the cytoplasm. It catalyses the reaction Release of an N-terminal pyroglutamyl group from a polypeptide, the second amino acid generally not being Pro.. Its function is as follows. Removes 5-oxoproline from various penultimate amino acid residues except L-proline. In Vibrio vulnificus (strain YJ016), this protein is Pyrrolidone-carboxylate peptidase.